We begin with the raw amino-acid sequence, 1035 residues long: Cell-division control histidine kinase PdhS (1035 aa).

The important for polar localization stretch occupies residues 1 to 613; sequence MSGSYPFIDI…HADGSEEPVD (613 aa). Residues 500 to 533 form a disordered region; that stretch reads QGLANTRAESETPVSETSSIEPVEPTPPVKTRSE. Residues 614–1035 are interaction with DivK; it reads AHLNAIAWRG…VFPPTRVLAD (422 aa). In terms of domain architecture, PAS spans 659–730; the sequence is HVEELKTILD…YLHGLSGNGV (72 aa). A Histidine kinase domain is found at 802–1031; it reads RISHEIRTPL…VVEIVFPPTR (230 aa). Phosphohistidine; by autocatalysis is present on His-805.

In terms of assembly, interacts with DivK.

Its subcellular location is the cytoplasm. The enzyme catalyses ATP + protein L-histidine = ADP + protein N-phospho-L-histidine.. Its function is as follows. Functions as a polar differentiation marker. Essential protein that, by localizing in the old pole of dividing cells, controls cell division and maturation, probably through control of DivK phosphorylation status and cellular distribution, which in turn regulates CtrA, a transcriptional regulator of the minB operon. The asymmetrical localization of this protein is probably required for cells to enter a new division cycle. The sequence is that of Cell-division control histidine kinase PdhS (pdhS) from Brucella melitensis biotype 1 (strain ATCC 23456 / CCUG 17765 / NCTC 10094 / 16M).